The sequence spans 214 residues: Adenylate kinase (214 aa).

10 to 15 (GAGKGT) contributes to the ATP binding site. The interval 30 to 59 (STGDMLRAAVKAGTPLGLEAKKVMDAGQLV) is NMP. Residues Thr31, Arg36, 57–59 (QLV), 85–88 (GFPR), and Gln92 each bind AMP. Residues 122 to 159 (GRRVHSGSGRVYHVVFNPPKVEGKDDVTGEDLSIRPDD) form an LID region. ATP-binding positions include Arg123 and 132–133 (VY). AMP is bound by residues Arg156 and Arg167. Gln200 is a binding site for ATP.

Belongs to the adenylate kinase family. Monomer.

It is found in the cytoplasm. It catalyses the reaction AMP + ATP = 2 ADP. The protein operates within purine metabolism; AMP biosynthesis via salvage pathway; AMP from ADP: step 1/1. Functionally, catalyzes the reversible transfer of the terminal phosphate group between ATP and AMP. Plays an important role in cellular energy homeostasis and in adenine nucleotide metabolism. The sequence is that of Adenylate kinase from Shewanella denitrificans (strain OS217 / ATCC BAA-1090 / DSM 15013).